A 108-amino-acid chain; its full sequence is Iron-sulfur cluster assembly protein CyaY (108 aa).

This sequence belongs to the frataxin family.

Its function is as follows. Involved in iron-sulfur (Fe-S) cluster assembly. May act as a regulator of Fe-S biogenesis. This is Iron-sulfur cluster assembly protein CyaY from Pseudomonas paraeruginosa (strain DSM 24068 / PA7) (Pseudomonas aeruginosa (strain PA7)).